The following is a 209-amino-acid chain: Probable calcium-binding protein CML36 (209 aa).

The segment at 22-59 is disordered; it reads SKSPTAFSFGSASSSSGQDCKNSGGDGGGGSVTPTSIL. A compositionally biased stretch (low complexity) spans 27–38; it reads AFSFGSASSSSG. 4 EF-hand domains span residues 66–101, 103–138, 139–174, and 176–209; these read YSYV…LGPD, LTEE…LDPA, RDST…IGDE, and CTLD…DLQR. Residues Asp-79, Asp-81, Asp-83, and Asp-90 each contribute to the Ca(2+) site. Ca(2+) is bound by residues Asp-152, Asp-154, Asp-156, Glu-163, Asp-189, Asp-191, Asp-193, and Glu-200.

Functionally, potential calcium sensor. This Arabidopsis thaliana (Mouse-ear cress) protein is Probable calcium-binding protein CML36 (CML36).